Consider the following 726-residue polypeptide: WD repeat-containing and planar cell polarity effector protein fritz homolog (726 aa).

WD repeat units lie at residues 305-343 and 344-383; these read LRSKAISCCKNSTEDKLIVGCEDSSVILYEAHRGVTLLA and QAELMPSLISCHPSGAILLVGSNQGELQVFDIALSPINIQ. A compositionally biased stretch (polar residues) spans 642-660; that stretch reads SSGSTPKHTIQQKIPNGPS. Positions 642-717 are disordered; that stretch reads SSGSTPKHTI…RRQDTEDVGS (76 aa). A compositionally biased stretch (acidic residues) spans 672 to 685; that stretch reads MEETEEEEEEEEEA. Over residues 701-712 the composition is skewed to basic and acidic residues; the sequence is GELREDHRRQDT.

The protein belongs to the WD repeat fritz family. Component of the CPLANE (ciliogenesis and planar polarity effectors) complex, composed of INTU, FUZ and WDPCP. Interacts with CPLANE1.

It is found in the cell membrane. It localises to the cytoplasm. Its subcellular location is the cytoskeleton. The protein localises to the cilium axoneme. The protein resides in the cilium basal body. In terms of biological role, probable effector of the planar cell polarity signaling pathway which regulates the septin cytoskeleton in both ciliogenesis and collective cell movements. Together with FUZ and WDPCP proposed to function as core component of the CPLANE (ciliogenesis and planar polarity effectors) complex involved in the recruitment of peripheral IFT-A proteins to basal bodies. Binds phosphatidylinositol 3-phosphate with highest affinity, followed by phosphatidylinositol 4-phosphate and phosphatidylinositol 5-phosphate. In Rattus norvegicus (Rat), this protein is WD repeat-containing and planar cell polarity effector protein fritz homolog (Wdpcp).